Consider the following 350-residue polypeptide: 2-oxoglutarate and iron-dependent oxygenase domain-containing protein 2 (350 aa).

In terms of domain architecture, Fe2OG dioxygenase spans 215-309 (DSHRAFVVKY…RWNLVVWLRA (95 aa)). Residues His-235, Asp-237, and His-290 each contribute to the Fe cation site. Arg-300 contributes to the 2-oxoglutarate binding site.

It belongs to the OGFOD2 family. It depends on Fe(2+) as a cofactor. The cofactor is L-ascorbate.

This is 2-oxoglutarate and iron-dependent oxygenase domain-containing protein 2 (OGFOD2) from Homo sapiens (Human).